Consider the following 487-residue polypeptide: Serine/threonine-protein kinase 4 (487 aa).

Met1 carries the post-translational modification N-acetylmethionine. Thr3 is modified (phosphothreonine). Residues 30 to 281 form the Protein kinase domain; that stretch reads FDVLEKLGEG…ATQLLQHPFV (252 aa). Residues 36–44 and Lys59 contribute to the ATP site; that span reads LGEGSYGSV. Residue Asp149 is the Proton acceptor of the active site. Position 183 is a phosphothreonine; by autocatalysis (Thr183). 2 positions are modified to phosphoserine: Ser265 and Ser320. Positions 289 to 327 form a coiled coil; the sequence is ILRDLINEAMDVKLKRQEAQQREVDQEEEENSEEDELDS. Positions 305 to 332 are disordered; it reads QEAQQREVDQEEEENSEEDELDSGTMVR. Residues 313–326 are compositionally biased toward acidic residues; that stretch reads DQEEEENSEEDELD. Residues Thr340 and Thr367 each carry the phosphothreonine modification. The residue at position 387 (Thr387) is a Phosphothreonine; by PKB/AKT1. 2 positions are modified to phosphoserine: Ser410 and Ser414. Phosphotyrosine is present on Tyr433. Residues 433–480 enclose the SARAH domain; that stretch reads YEFLKSWTVEDLQKRLLALDPMMEQEIEEIRQKYQSKRQPILDAIEAK.

The protein belongs to the protein kinase superfamily. STE Ser/Thr protein kinase family. STE20 subfamily. As to quaternary structure, homodimer; mediated via the coiled-coil region. Interacts with NORE1, which inhibits autoactivation. Interacts with and stabilizes SAV1. Interacts with RASSF1. Interacts with FOXO3. Interacts with RASSF2 (via SARAH domain). Interacts with AR, PKB/AKT1, TNNI3 and SIRT1. Interacts with DLG5 (via PDZ domain 3). Interacts with MARK3 and SCRIB in the presence of DLG5. Requires Mg(2+) as cofactor. In terms of processing, autophosphorylated on serine and threonine residues. Phosphorylation at Thr-387 by PKB/AKT1, leads to inhibition of its: kinase activity, nuclear translocation and autophosphorylation at Thr-183. It also diminishes its cleavage by caspases and its ability to phosphorylate FOXO3. Proteolytically cleaved by caspase-3 during apoptosis at Asp-326 and Asp-349 resulting in a 37 kDa or a 39 kDa subunit respectively. The 39 kDa subunit is further cleaved into the 37 kDa form. Proteolytic cleavage results in kinase activation and nuclear translocation of the truncated form (MST1/N). It is less likely that cleavage at Asp-349 is a prerequisite for activation as this site is not conserved in the murine ortholog.

The protein resides in the cytoplasm. Its subcellular location is the nucleus. The enzyme catalyses L-seryl-[protein] + ATP = O-phospho-L-seryl-[protein] + ADP + H(+). The catalysed reaction is L-threonyl-[protein] + ATP = O-phospho-L-threonyl-[protein] + ADP + H(+). With respect to regulation, inhibited by the C-terminal non-catalytic region. Activated by caspase-cleavage. Full activation also requires homodimerization and autophosphorylation of Thr-183. Activated by RASSF1 which acts by preventing its dephosphorylation. In terms of biological role, stress-activated, pro-apoptotic kinase which, following caspase-cleavage, enters the nucleus and induces chromatin condensation followed by internucleosomal DNA fragmentation. Key component of the Hippo signaling pathway which plays a pivotal role in organ size control and tumor suppression by restricting proliferation and promoting apoptosis. The core of this pathway is composed of a kinase cascade wherein STK3/MST2 and STK4/MST1, in complex with its regulatory protein SAV1, phosphorylates and activates LATS1/2 in complex with its regulatory protein MOB1, which in turn phosphorylates and inactivates YAP1 oncoprotein and WWTR1/TAZ. Phosphorylation of YAP1 by LATS2 inhibits its translocation into the nucleus to regulate cellular genes important for cell proliferation, cell death, and cell migration. STK3/MST2 and STK4/MST1 are required to repress proliferation of mature hepatocytes, to prevent activation of facultative adult liver stem cells (oval cells), and to inhibit tumor formation. Phosphorylates 'Ser-14' of histone H2B (H2BS14ph) during apoptosis. Phosphorylates FOXO3 upon oxidative stress, which results in its nuclear translocation and cell death initiation. Phosphorylates MOBKL1A, MOBKL1B and RASSF2. Phosphorylates TNNI3 (cardiac Tn-I) and alters its binding affinity to TNNC1 (cardiac Tn-C) and TNNT2 (cardiac Tn-T). Phosphorylates FOXO1 on 'Ser-212' and regulates its activation and stimulates transcription of PMAIP1 in a FOXO1-dependent manner. Phosphorylates SIRT1 and inhibits SIRT1-mediated p53/TP53 deacetylation, thereby promoting p53/TP53 dependent transcription and apoptosis upon DNA damage. Acts as an inhibitor of PKB/AKT1. Phosphorylates AR on 'Ser-650' and suppresses its activity by intersecting with PKB/AKT1 signaling and antagonizing formation of AR-chromatin complexes. This is Serine/threonine-protein kinase 4 (STK4) from Bos taurus (Bovine).